The chain runs to 160 residues: Cytochrome b6-f complex subunit 4 (160 aa).

A run of 3 helical transmembrane segments spans residues 36–56 (LLYI…GLAV), 95–115 (LLGI…PFIE), and 131–151 (AFFL…CLPI).

This sequence belongs to the cytochrome b family. PetD subfamily. The 4 large subunits of the cytochrome b6-f complex are cytochrome b6, subunit IV (17 kDa polypeptide, PetD), cytochrome f and the Rieske protein, while the 4 small subunits are PetG, PetL, PetM and PetN. The complex functions as a dimer.

Its subcellular location is the cellular thylakoid membrane. In terms of biological role, component of the cytochrome b6-f complex, which mediates electron transfer between photosystem II (PSII) and photosystem I (PSI), cyclic electron flow around PSI, and state transitions. The polypeptide is Cytochrome b6-f complex subunit 4 (Prochlorococcus marinus (strain SARG / CCMP1375 / SS120)).